Consider the following 321-residue polypeptide: Translation initiation factor eIF2B subunit alpha (321 aa).

Belongs to the eIF-2B alpha/beta/delta subunits family. Component of the translation initiation factor 2B (eIF2B) complex which is a heterodecamer of two sets of five different subunits: alpha, beta, gamma, delta and epsilon. Subunits alpha, beta and delta comprise a regulatory subcomplex and subunits epsilon and gamma comprise a catalytic subcomplex. Within the complex, the hexameric regulatory complex resides at the center, with the two heterodimeric catalytic subcomplexes bound on opposite sides.

The protein localises to the cytoplasm. It localises to the cytosol. Functionally, acts as a component of the translation initiation factor 2B (eIF2B) complex, which catalyzes the exchange of GDP for GTP on eukaryotic initiation factor 2 (eIF2) gamma subunit. Its guanine nucleotide exchange factor activity is repressed when bound to eIF2 complex phosphorylated on the alpha subunit, thereby limiting the amount of methionyl-initiator methionine tRNA available to the ribosome and consequently global translation is repressed. This is Translation initiation factor eIF2B subunit alpha (eif2b1) from Dictyostelium discoideum (Social amoeba).